The following is a 1954-amino-acid chain: Protein abnormal spindle (1954 aa).

The segment at 134 to 155 is disordered; the sequence is VKNPRKFPTVGKTLQLKSPTGA. Phosphoserine occurs at positions 151 and 360. Threonine 364 is subject to Phosphothreonine. 10 positions are modified to phosphoserine: serine 388, serine 390, serine 395, serine 398, serine 491, serine 495, serine 497, serine 501, serine 504, and serine 514. A disordered region spans residues 476–548; the sequence is KSVKGSPVKN…SSSAHAWPHA (73 aa). Residues 498 to 507 are compositionally biased toward polar residues; it reads DAPSNESLYR. Residues 528 to 548 show a composition bias toward low complexity; the sequence is RSAAPANASARSSSAHAWPHA. In terms of domain architecture, Calponin-homology (CH) spans 836–968; it reads KETKDILLRF…LLWQLIYKFR (133 aa). IQ domains lie at 1004–1033, 1386–1415, and 1467–1496; these read RHRAATVIQAVFRGHQMRKYVKLFKTERTQ, TQAAVSCLQMHWRNHLLRKRERNSFLQLRQ, and QREAIIKVQRRYRGNLEMRKQIEVYQKQRQ. Residues 1614 to 1641 are a coiled coil; that stretch reads RANRSMKQARQEFVQLRTIAVHLQQKFR. IQ domains are found at residues 1656-1687 and 1690-1721; these read LRCSMPGFQARARGFMARKRFQALMTPEMMDL and QKRAAKVIQRYWRGYLIRRRQKHQGLLDIRKR.

It localises to the cytoplasm. The protein resides in the nucleus. It is found in the cytoskeleton. Its subcellular location is the spindle. The protein localises to the microtubule organizing center. It localises to the perinuclear region. Its function is as follows. Required to maintain the structure of the centrosomal microtubule organizing center (MTOC) during mitosis. May have a preferential role in regulating neurogenesis. Required for germ cell mitosis and oocyte differentiation. This chain is Protein abnormal spindle, found in Drosophila melanogaster (Fruit fly).